We begin with the raw amino-acid sequence, 127 residues long: Cytochrome c' (127 aa).

Glutamine 1 bears the Pyrrolidone carboxylic acid mark. Heme c-binding residues include arginine 12, glutamine 13, aspartate 67, cysteine 116, cysteine 119, and histidine 120.

In terms of assembly, homodimer. Post-translationally, binds 1 heme c group covalently per subunit.

It localises to the periplasm. Cytochrome c' is the most widely occurring bacterial c-type cytochrome. Cytochromes c' are high-spin proteins and the heme has no sixth ligand. Their exact function is not known. The protein is Cytochrome c' of Alcaligenes xylosoxydans xylosoxydans (Achromobacter xylosoxidans).